A 451-amino-acid chain; its full sequence is Tubulin gamma-1 chain (451 aa).

Serine 131 bears the Phosphoserine; by BRSK1 mark. 142–148 (AGGTGSG) provides a ligand contact to GTP.

Belongs to the tubulin family. Component of the gamma-tubulin ring complex (gTuRC) consisting of TUBGCP2, TUBGCP3, TUBGCP4, TUBGCP5 and TUBGCP6 and gamma-tubulin TUBG1 or TUBG2. TUBGCP2, TUBGCP3, TUBGCP4, TUBGCP5 and TUBGCP6 assemble in a 5:5:2:1:1 stoichiometry; each is associated with a gamma-tubulin, thereby arranging 14 gamma-tubulins in a helical manner. Gamma-tubulin at the first position is blocked by TUBGCP3 at the last position, allowing 13 protafilaments to grow into a microtubule. The gTuRC (via TUBGCP3 and TUBGCP6) interacts with ACTB and MZT1; the interactions form a luminal bridge that stabilizes the initial structure during complex assembly. The gTuRC (via TUBGCP2) interacts with MZT2A/MZT2B and CDK5RAP2 (via CM1 motif); the interactions play a role in gTuRC activation. Interacts with alpha-beta tubulin heterodimers; the interaction allows microtubules to nucleate from the gTuRC. Interacts with B9D2. Interacts with CDK5RAP2; the interaction is leading to centrosomal localization of TUBG1 and CDK5RAP2. Interacts with CIMAP3. Interacts with SAS6 and NUP62 at the centrosome. Interacts with EML3 (phosphorylated at 'Thr-881') and HAUS8. Interacts with DNM2; this interaction may participate in centrosome cohesion. Interacts with CCDC66. In terms of processing, phosphorylation at Ser-131 by BRSK1 regulates centrosome duplication, possibly by mediating relocation of gamma-tubulin and its associated proteins from the cytoplasm to the centrosome.

The protein localises to the cytoplasm. Its subcellular location is the cytoskeleton. It is found in the microtubule organizing center. It localises to the centrosome. The protein resides in the spindle. Tubulin is the major constituent of microtubules, protein filaments consisting of alpha- and beta-tubulin heterodimers. Gamma-tubulin is a key component of the gamma-tubulin ring complex (gTuRC) which mediates microtubule nucleation. The gTuRC regulates the minus-end nucleation of alpha-beta tubulin heterodimers that grow into microtubule protafilaments, a critical step in centrosome duplication and spindle formation. The protein is Tubulin gamma-1 chain of Mus musculus (Mouse).